Here is an 81-residue protein sequence, read N- to C-terminus: Sec-independent protein translocase protein TatA (81 aa).

The chain crosses the membrane as a helical span at residues M1–G21. Residues A42 to A81 are disordered.

It belongs to the TatA/E family. In terms of assembly, the Tat system comprises two distinct complexes: a TatABC complex, containing multiple copies of TatA, TatB and TatC subunits, and a separate TatA complex, containing only TatA subunits. Substrates initially bind to the TatABC complex, which probably triggers association of the separate TatA complex to form the active translocon.

It localises to the cell inner membrane. Part of the twin-arginine translocation (Tat) system that transports large folded proteins containing a characteristic twin-arginine motif in their signal peptide across membranes. TatA could form the protein-conducting channel of the Tat system. In Vibrio parahaemolyticus serotype O3:K6 (strain RIMD 2210633), this protein is Sec-independent protein translocase protein TatA.